A 604-amino-acid chain; its full sequence is Elongation factor 4 (604 aa).

One can recognise a tr-type G domain in the interval 4–186 (EFIRNFSIIA…AIVHLVPPPK (183 aa)). GTP contacts are provided by residues 16–21 (DHGKST) and 133–136 (NKID).

It belongs to the TRAFAC class translation factor GTPase superfamily. Classic translation factor GTPase family. LepA subfamily.

It localises to the cell inner membrane. It catalyses the reaction GTP + H2O = GDP + phosphate + H(+). In terms of biological role, required for accurate and efficient protein synthesis under certain stress conditions. May act as a fidelity factor of the translation reaction, by catalyzing a one-codon backward translocation of tRNAs on improperly translocated ribosomes. Back-translocation proceeds from a post-translocation (POST) complex to a pre-translocation (PRE) complex, thus giving elongation factor G a second chance to translocate the tRNAs correctly. Binds to ribosomes in a GTP-dependent manner. This is Elongation factor 4 from Solibacter usitatus (strain Ellin6076).